Reading from the N-terminus, the 131-residue chain is Transcription antitermination protein NusB (131 aa).

It belongs to the NusB family.

Functionally, involved in transcription antitermination. Required for transcription of ribosomal RNA (rRNA) genes. Binds specifically to the boxA antiterminator sequence of the ribosomal RNA (rrn) operons. This chain is Transcription antitermination protein NusB, found in Campylobacter concisus (strain 13826).